The chain runs to 131 residues: Cyclin-dependent kinase 4 inhibitor B (131 aa).

4 ANK repeats span residues 6–35 (GGDA…DPNR), 39–67 (FGRR…DPNC), 72–101 (TLTR…RLDV), and 105–131 (WGRL…TAGD).

Belongs to the CDKN2 cyclin-dependent kinase inhibitor family. In terms of assembly, heterodimer of CDKN2B with CDK4 or CDK6.

Its function is as follows. Interacts strongly with CDK4 and CDK6. Potent inhibitor. Potential effector of TGF-beta induced cell cycle arrest. The chain is Cyclin-dependent kinase 4 inhibitor B (CDKN2B) from Bos taurus (Bovine).